A 614-amino-acid chain; its full sequence is Inactive leucine-rich repeat receptor-like serine/threonine-protein kinase At5g24100 (614 aa).

The N-terminal stretch at 1-21 is a signal peptide; it reads MSRGRSFIFYFVLFLFFGSSA. Topologically, residues 22–251 are extracellular; that stretch reads LYSQVTGDLA…KNGIYISEPA (230 aa). Asn-53 carries an N-linked (GlcNAc...) asparagine glycan. 6 LRR repeats span residues 71–95, 96–120, 121–146, 148–167, 168–190, and 191–214; these read GTRV…TISR, LSEL…FLQL, KKLK…TWTN, TVLD…GFAN, LTGL…DLNL, and PGLR…LKRF. N-linked (GlcNAc...) asparagine glycosylation is found at Asn-146, Asn-158, and Asn-167. Residues Asn-197 and Asn-202 are each glycosylated (N-linked (GlcNAc...) asparagine). A helical membrane pass occupies residues 252–272; sequence ILGIAISVCFVIFFVIAVVII. Over 273–614 the chain is Cytoplasmic; sequence VCYVKRQRKS…VETLEEIERD (342 aa). The Protein kinase domain maps to 341 to 611; the sequence is IASAEFLGKG…VKVVETLEEI (271 aa). Ser-343 carries the post-translational modification Phosphoserine. Residues 347–355 and Lys-369 contribute to the ATP site; that span reads LGKGVFGMT. Position 420 is a phosphoserine (Ser-420). 3 positions are modified to phosphothreonine: Thr-441, Thr-514, and Thr-591. Residues 578–601 form an LRR 7 repeat; sequence AKLLQMLQLGTSCTAMVPAKRPDM.

The protein belongs to the protein kinase superfamily. Ser/Thr protein kinase family.

It localises to the cell membrane. This chain is Inactive leucine-rich repeat receptor-like serine/threonine-protein kinase At5g24100, found in Arabidopsis thaliana (Mouse-ear cress).